The chain runs to 360 residues: Protein Wnt-5b (360 aa).

A signal peptide spans 1–16 (MTPILRLLLLSSLLSC). A disulfide bridge links Cys-84 with Cys-95. Residues Asn-94 and Asn-100 are each glycosylated (N-linked (GlcNAc...) asparagine). 10 disulfide bridges follow: Cys-134–Cys-142, Cys-144–Cys-162, Cys-218–Cys-232, Cys-220–Cys-227, Cys-289–Cys-320, Cys-305–Cys-315, Cys-319–Cys-359, Cys-335–Cys-350, Cys-337–Cys-347, and Cys-342–Cys-343. Ser-224 is lipidated: O-palmitoleoyl serine; by PORCN. 2 N-linked (GlcNAc...) asparagine glycosylation sites follow: Asn-292 and Asn-306.

It belongs to the Wnt family. Palmitoleoylation is required for efficient binding to frizzled receptors. Depalmitoleoylation leads to Wnt signaling pathway inhibition.

Its subcellular location is the secreted. The protein localises to the extracellular space. It is found in the extracellular matrix. Its function is as follows. Ligand for members of the frizzled family of seven transmembrane receptors. Probable developmental protein. May be a signaling molecule which affects the development of discrete regions of tissues. Is likely to signal over only few cell diameters. This is Protein Wnt-5b (wnt5b) from Xenopus laevis (African clawed frog).